We begin with the raw amino-acid sequence, 617 residues long: MCGIIGLAFAEGNSVAGALVRGLKRLEYRGYDSMGVAVIEPPGRLVVRKAAGKIGEVVRRTGVLSLRGRVGIGHTRWATHGPPNDVNAHPHTDCGGRVAVVHNGVIRNYASLRRELEARGHRLVSETDTELVAHLIEEYLGRGYSFLEALSLLGRVLRGSYALALLHLGEPDKVYFLRYKSPLVVGLGEGVNAVASDITAVLDVARDVIVLEDGEFGWISPEGVAIYRPRGDGGFEPLPPGALEERVKRVEWTPESASKAGYPHFMLKEIYEQPRALAETFEGIIEDPALLRAAGLVAGAGRLLIVGAGTSFHAGLVGHYYLSRLAGILGHPVVASEHKVYTPGVDGETVVVAVSQSGETYDTLEAVREWRGRGARVIGVTNVVGSALDREADVTLYLRAGPEIGVAATKTFLAQTILLQTLSIAAAGEAGRLTSGETRELTGVLEGAPDAARRAILASEGAAREAASLLKGAGSMYIIGRGLGGRLAMEAALKVKEVSYIHAEAYPAGESKHGPIALVEPGFKVYVVATSDSPEVMGNAIEMKARGASVTVVAPSDLQLDTPEGIEVLKMPPTGGETLLDPYSLTPYFQLLAYHLAVARGYDPDKPRNLAKTVTVE.

C2 serves as the catalytic Nucleophile; for GATase activity. The region spanning 2 to 222 is the Glutamine amidotransferase type-2 domain; the sequence is CGIIGLAFAE…DGEFGWISPE (221 aa). 2 consecutive SIS domains span residues 293–432 and 466–607; these read AAGL…EAGR and AASL…PDKP. The For Fru-6P isomerization activity role is filled by K612.

Homodimer.

It is found in the cytoplasm. It carries out the reaction D-fructose 6-phosphate + L-glutamine = D-glucosamine 6-phosphate + L-glutamate. In terms of biological role, catalyzes the first step in hexosamine metabolism, converting fructose-6P into glucosamine-6P using glutamine as a nitrogen source. This Aeropyrum pernix (strain ATCC 700893 / DSM 11879 / JCM 9820 / NBRC 100138 / K1) protein is Glutamine--fructose-6-phosphate aminotransferase [isomerizing].